A 55-amino-acid chain; its full sequence is Large ribosomal subunit protein bL33 (55 aa).

The protein belongs to the bacterial ribosomal protein bL33 family.

The sequence is that of Large ribosomal subunit protein bL33 from Buchnera aphidicola subsp. Baizongia pistaciae (strain Bp).